Reading from the N-terminus, the 1079-residue chain is Spermatogenesis-associated protein 31G1 (1079 aa).

Disordered regions lie at residues 97–145 (EVEE…GSEG), 261–281 (EDLE…SPSV), 297–317 (GVLS…LEVL), 331–362 (KMPQ…EGGL), 376–412 (EKPQ…RYKP), 506–566 (NLWA…SPPP), 637–678 (VPVF…EQRK), and 840–975 (PHSS…NHPA). Positions 98-113 (VEEEGEEEEEGEDEAS) are enriched in acidic residues. The span at 336 to 345 (FEPPMPPPCQ) shows a compositional bias: pro residues. The segment covering 398–412 (LQRESSLEDPSRYKP) has biased composition (basic and acidic residues). 2 stretches are compositionally biased toward low complexity: residues 551 to 562 (NSSASRSPSLAL) and 645 to 655 (SSPSSNSVSKS). The span at 669-678 (PDGEAVEQRK) shows a compositional bias: basic and acidic residues. The span at 942–951 (AKKREHPRKP) shows a compositional bias: basic residues.

Functionally, dispensable for normal development and fertility. This chain is Spermatogenesis-associated protein 31G1, found in Homo sapiens (Human).